A 214-amino-acid polypeptide reads, in one-letter code: dITP/XTP pyrophosphatase (214 aa).

13–18 (SHNKGK) is a substrate binding site. Residues glutamate 45 and aspartate 74 each coordinate Mg(2+). The active-site Proton acceptor is aspartate 74. Residues serine 75, 163-166 (FGYD), lysine 186, and 199-200 (HR) contribute to the substrate site.

It belongs to the HAM1 NTPase family. As to quaternary structure, homodimer. Requires Mg(2+) as cofactor.

It catalyses the reaction XTP + H2O = XMP + diphosphate + H(+). It carries out the reaction dITP + H2O = dIMP + diphosphate + H(+). The enzyme catalyses ITP + H2O = IMP + diphosphate + H(+). Functionally, pyrophosphatase that catalyzes the hydrolysis of nucleoside triphosphates to their monophosphate derivatives, with a high preference for the non-canonical purine nucleotides XTP (xanthosine triphosphate), dITP (deoxyinosine triphosphate) and ITP. Seems to function as a house-cleaning enzyme that removes non-canonical purine nucleotides from the nucleotide pool, thus preventing their incorporation into DNA/RNA and avoiding chromosomal lesions. The protein is dITP/XTP pyrophosphatase of Agrobacterium fabrum (strain C58 / ATCC 33970) (Agrobacterium tumefaciens (strain C58)).